The sequence spans 189 residues: Crossover junction endodeoxyribonuclease RuvC (189 aa).

Active-site residues include Asp11, Glu71, and Asp143. Residues Asp11, Glu71, and Asp143 each coordinate Mg(2+).

This sequence belongs to the RuvC family. In terms of assembly, homodimer which binds Holliday junction (HJ) DNA. The HJ becomes 2-fold symmetrical on binding to RuvC with unstacked arms; it has a different conformation from HJ DNA in complex with RuvA. In the full resolvosome a probable DNA-RuvA(4)-RuvB(12)-RuvC(2) complex forms which resolves the HJ. Mg(2+) is required as a cofactor.

It is found in the cytoplasm. The enzyme catalyses Endonucleolytic cleavage at a junction such as a reciprocal single-stranded crossover between two homologous DNA duplexes (Holliday junction).. Functionally, the RuvA-RuvB-RuvC complex processes Holliday junction (HJ) DNA during genetic recombination and DNA repair. Endonuclease that resolves HJ intermediates. Cleaves cruciform DNA by making single-stranded nicks across the HJ at symmetrical positions within the homologous arms, yielding a 5'-phosphate and a 3'-hydroxyl group; requires a central core of homology in the junction. The consensus cleavage sequence is 5'-(A/T)TT(C/G)-3'. Cleavage occurs on the 3'-side of the TT dinucleotide at the point of strand exchange. HJ branch migration catalyzed by RuvA-RuvB allows RuvC to scan DNA until it finds its consensus sequence, where it cleaves and resolves the cruciform DNA. This is Crossover junction endodeoxyribonuclease RuvC from Methylorubrum populi (strain ATCC BAA-705 / NCIMB 13946 / BJ001) (Methylobacterium populi).